A 354-amino-acid polypeptide reads, in one-letter code: Protein OPG055 (354 aa).

Belongs to the orthopoxvirus OPG055 family.

Functionally, stimulates increases in peripheral microtubule dynamics and may increase the motility of the infected cells, contributing to cell-to-cell spread of the virus. Seems to inhibit the signaling via the GTPase RHOA and DIAPH1/mDia. The polypeptide is Protein OPG055 (OPG055) (Cynomys gunnisoni (Gunnison's prairie dog)).